The sequence spans 198 residues: Glycerol-3-phosphate acyltransferase 3 (198 aa).

4 consecutive transmembrane segments (helical) span residues 4-24 (TYLL…LVVG), 71-91 (LPMV…AVLG), 113-133 (LLCY…TLLF), and 147-167 (VVAV…AMCL).

It belongs to the PlsY family. In terms of assembly, probably interacts with PlsX.

It is found in the cell membrane. The catalysed reaction is an acyl phosphate + sn-glycerol 3-phosphate = a 1-acyl-sn-glycero-3-phosphate + phosphate. The protein operates within lipid metabolism; phospholipid metabolism. In terms of biological role, catalyzes the transfer of an acyl group from acyl-phosphate (acyl-PO(4)) to glycerol-3-phosphate (G3P) to form lysophosphatidic acid (LPA). This enzyme utilizes acyl-phosphate as fatty acyl donor, but not acyl-CoA or acyl-ACP. This Bacillus anthracis protein is Glycerol-3-phosphate acyltransferase 3.